The chain runs to 197 residues: MVALLAEHTDTRQQAGLLVRPDNSDALSVAVTATPIVTTTGTPATPPALELDVQHGDGVSKRNGLPSRKQIEKWVKSALYADAALTVRFVDETEGRTLNRSYRGKDYATNVLTFAYAENDDDPVAGDIVLCCPVVESEAKAQKKSLEAHYAHLIVHGVLHAQGYEHDDDTEAEEMEAIETETLQALGFEDPYKPIRE.

H156, H160, and H166 together coordinate Zn(2+).

The protein belongs to the endoribonuclease YbeY family. Zn(2+) serves as cofactor.

It is found in the cytoplasm. Its function is as follows. Single strand-specific metallo-endoribonuclease involved in late-stage 70S ribosome quality control and in maturation of the 3' terminus of the 16S rRNA. This Cupriavidus metallidurans (strain ATCC 43123 / DSM 2839 / NBRC 102507 / CH34) (Ralstonia metallidurans) protein is Endoribonuclease YbeY.